Consider the following 507-residue polypeptide: Probable cyclic di-GMP phosphodiesterase PdeG (507 aa).

2 helical membrane-spanning segments follow: residues 4–24 (TLIPILVAICLFITGVAILNI) and 217–237 (LIDKGFGILIFILLIACAAAF). Positions 246–500 (SATPEEILRR…DLVKIILSKP (255 aa)) constitute an EAL domain.

The protein localises to the cell membrane. It catalyses the reaction 3',3'-c-di-GMP + H2O = 5'-phosphoguanylyl(3'-&gt;5')guanosine + H(+). Its function is as follows. Phosphodiesterase (PDE) that catalyzes the hydrolysis of cyclic-di-GMP (c-di-GMP) to 5'-pGpG. The polypeptide is Probable cyclic di-GMP phosphodiesterase PdeG (Escherichia coli (strain K12)).